A 654-amino-acid polypeptide reads, in one-letter code: Macrolide export ATP-binding/permease protein MacB (654 aa).

One can recognise an ABC transporter domain in the interval 6–244 (IELRGLRREF…RAGDAPTRQP (239 aa)). 42–49 (GASGSGKS) serves as a coordination point for ATP. The next 4 membrane-spanning stretches (helical) occupy residues 278–298 (FLTMLGIIIGIASVVFVVAVG), 527–547 (LTLMIAAIAVISLVVGGIGVM), 584–604 (VVCLIGGGLGVGVAFGLAALF), and 619–639 (SIAAAFVCSTGIGIVFGYLPA).

It belongs to the ABC transporter superfamily. Macrolide exporter (TC 3.A.1.122) family. Homodimer.

The protein resides in the cell inner membrane. Its function is as follows. Non-canonical ABC transporter that contains transmembrane domains (TMD), which form a pore in the inner membrane, and an ATP-binding domain (NBD), which is responsible for energy generation. Confers resistance against macrolides. This chain is Macrolide export ATP-binding/permease protein MacB, found in Rhodopseudomonas palustris (strain HaA2).